The sequence spans 172 residues: Endoribonuclease YbeY (172 aa).

Positions 1–21 are disordered; it reads MTLHVGAEPAPREDDTEDALR. The segment covering 10–21 has biased composition (basic and acidic residues); sequence APREDDTEDALR. Zn(2+) is bound by residues H134, H138, and H144.

The protein belongs to the endoribonuclease YbeY family. The cofactor is Zn(2+).

It is found in the cytoplasm. Its function is as follows. Single strand-specific metallo-endoribonuclease involved in late-stage 70S ribosome quality control and in maturation of the 3' terminus of the 16S rRNA. This chain is Endoribonuclease YbeY, found in Burkholderia lata (strain ATCC 17760 / DSM 23089 / LMG 22485 / NCIMB 9086 / R18194 / 383).